We begin with the raw amino-acid sequence, 150 residues long: Large ribosomal subunit protein uL13 (150 aa).

It belongs to the universal ribosomal protein uL13 family. As to quaternary structure, part of the 50S ribosomal subunit.

Its function is as follows. This protein is one of the early assembly proteins of the 50S ribosomal subunit, although it is not seen to bind rRNA by itself. It is important during the early stages of 50S assembly. The polypeptide is Large ribosomal subunit protein uL13 (Chlamydia trachomatis serovar A (strain ATCC VR-571B / DSM 19440 / HAR-13)).